A 344-amino-acid polypeptide reads, in one-letter code: Anthranilate phosphoribosyltransferase (344 aa).

5-phospho-alpha-D-ribose 1-diphosphate contacts are provided by residues Gly80, 83–84 (GD), Thr88, 90–93 (NVST), 108–116 (KHGNRSVSS), and Ser120. Residue Gly80 participates in anthranilate binding. Ser92 provides a ligand contact to Mg(2+). Residue Asn111 participates in anthranilate binding. Arg166 contacts anthranilate. Residues Asp225 and Glu226 each coordinate Mg(2+).

Belongs to the anthranilate phosphoribosyltransferase family. Homodimer. Requires Mg(2+) as cofactor.

The enzyme catalyses N-(5-phospho-beta-D-ribosyl)anthranilate + diphosphate = 5-phospho-alpha-D-ribose 1-diphosphate + anthranilate. It participates in amino-acid biosynthesis; L-tryptophan biosynthesis; L-tryptophan from chorismate: step 2/5. Catalyzes the transfer of the phosphoribosyl group of 5-phosphorylribose-1-pyrophosphate (PRPP) to anthranilate to yield N-(5'-phosphoribosyl)-anthranilate (PRA). The polypeptide is Anthranilate phosphoribosyltransferase (Legionella pneumophila (strain Corby)).